The primary structure comprises 221 residues: Leucine rich adaptor protein 1-like (221 aa).

The residue at position 1 (methionine 1) is an N-acetylmethionine. The interval 24–81 (LARSLRGEELAPREGAADPSGVGGSCSSSSSCSSFAPSVSSSSSSSPASGSPRRSHPS) is disordered. A compositionally biased stretch (basic and acidic residues) spans 28 to 39 (LRGEELAPREGA). Residues 48-75 (SCSSSSSCSSFAPSVSSSSSSSPASGSP) are compositionally biased toward low complexity.

The polypeptide is Leucine rich adaptor protein 1-like (Lurap1l) (Mus musculus (Mouse)).